The primary structure comprises 155 residues: MLKKKKTEVYALGEHISMSADKARRVIDQIRGRSYEETLMILELMPYRACYPILKLVYSAAANASYNMGSNETNLVISKAEVNEGTTVKKLKPRARGRSFPIKRSTCHITIVMKDISLDDEYGEMSSLKKTRWKKKSTAMTYRDMYNSGGLWDKK.

It belongs to the universal ribosomal protein uL22 family. In terms of assembly, part of the 50S ribosomal subunit.

It is found in the plastid. The protein resides in the chloroplast. Its function is as follows. This protein binds specifically to 23S rRNA. Functionally, the globular domain of the protein is located near the polypeptide exit tunnel on the outside of the subunit, while an extended beta-hairpin is found that lines the wall of the exit tunnel in the center of the 70S ribosome. The sequence is that of Large ribosomal subunit protein uL22c (rpl22) from Solanum tuberosum (Potato).